The primary structure comprises 251 residues: 1-(5-phosphoribosyl)-5-[(5-phosphoribosylamino)methylideneamino] imidazole-4-carboxamide isomerase (251 aa).

Residue D7 is the Proton acceptor of the active site. The active-site Proton donor is the D131.

Belongs to the HisA/HisF family.

It localises to the cytoplasm. The enzyme catalyses 1-(5-phospho-beta-D-ribosyl)-5-[(5-phospho-beta-D-ribosylamino)methylideneamino]imidazole-4-carboxamide = 5-[(5-phospho-1-deoxy-D-ribulos-1-ylimino)methylamino]-1-(5-phospho-beta-D-ribosyl)imidazole-4-carboxamide. It participates in amino-acid biosynthesis; L-histidine biosynthesis; L-histidine from 5-phospho-alpha-D-ribose 1-diphosphate: step 4/9. This chain is 1-(5-phosphoribosyl)-5-[(5-phosphoribosylamino)methylideneamino] imidazole-4-carboxamide isomerase, found in Blochmanniella floridana.